The sequence spans 195 residues: CASP-like protein 2C2 (195 aa).

The Cytoplasmic portion of the chain corresponds to 1-18; sequence MAATTAAAAVPGVVRAER. Residues 19 to 39 form a helical membrane-spanning segment; sequence LLRGGCVVMAATAALLLGFSA. Residues 40-57 are Extracellular-facing; that stretch reads ETKTVLFVRKTAVAKDVQ. Residues 58 to 78 form a helical membrane-spanning segment; that stretch reads ALWVLTVAAAAAAGYQFAQLV. Over 79-106 the chain is Cytoplasmic; sequence RCMYCSSSGDAGAMAVAWTSFLLDKGCA. A helical transmembrane segment spans residues 107–127; the sequence is YVVFASTAAALQACMVGLIGV. The Extracellular portion of the chain corresponds to 128 to 145; sequence EALQWSKLCNIYTRFCEQ. A helical membrane pass occupies residues 146 to 166; that stretch reads AAAGMLCSFLAAAGMAVLSAF. Topologically, residues 167-195 are cytoplasmic; it reads SARRLFRLYSPAGHRRSCPRAAVLATSPH.

The protein belongs to the Casparian strip membrane proteins (CASP) family. Homodimer and heterodimers.

It localises to the cell membrane. In Oryza sativa subsp. japonica (Rice), this protein is CASP-like protein 2C2.